Reading from the N-terminus, the 199-residue chain is GTP cyclohydrolase-2 (199 aa).

52 to 56 (RMHSE) serves as a coordination point for GTP. The Zn(2+) site is built by C57, C68, and C70. Residues Q73, 94 to 96 (EGR), and T116 contribute to the GTP site. The active-site Proton acceptor is D128. R130 acts as the Nucleophile in catalysis. GTP-binding residues include T151 and K156.

This sequence belongs to the GTP cyclohydrolase II family. The cofactor is Zn(2+).

It catalyses the reaction GTP + 4 H2O = 2,5-diamino-6-hydroxy-4-(5-phosphoribosylamino)-pyrimidine + formate + 2 phosphate + 3 H(+). The protein operates within cofactor biosynthesis; riboflavin biosynthesis; 5-amino-6-(D-ribitylamino)uracil from GTP: step 1/4. Its function is as follows. Catalyzes the conversion of GTP to 2,5-diamino-6-ribosylamino-4(3H)-pyrimidinone 5'-phosphate (DARP), formate and pyrophosphate. The polypeptide is GTP cyclohydrolase-2 (Aliivibrio fischeri (strain ATCC 700601 / ES114) (Vibrio fischeri)).